Here is a 176-residue protein sequence, read N- to C-terminus: Adenine phosphoribosyltransferase (176 aa).

Belongs to the purine/pyrimidine phosphoribosyltransferase family. As to quaternary structure, homodimer.

The protein localises to the cytoplasm. It carries out the reaction AMP + diphosphate = 5-phospho-alpha-D-ribose 1-diphosphate + adenine. Its pathway is purine metabolism; AMP biosynthesis via salvage pathway; AMP from adenine: step 1/1. Its function is as follows. Catalyzes a salvage reaction resulting in the formation of AMP, that is energically less costly than de novo synthesis. This chain is Adenine phosphoribosyltransferase, found in Borreliella burgdorferi (strain ATCC 35210 / DSM 4680 / CIP 102532 / B31) (Borrelia burgdorferi).